A 432-amino-acid chain; its full sequence is Enolase (432 aa).

Residue glutamine 166 participates in (2R)-2-phosphoglycerate binding. Glutamate 208 acts as the Proton donor in catalysis. Positions 245, 291, and 318 each coordinate Mg(2+). Positions 343, 372, 373, and 394 each coordinate (2R)-2-phosphoglycerate. Lysine 343 acts as the Proton acceptor in catalysis.

This sequence belongs to the enolase family. Requires Mg(2+) as cofactor.

Its subcellular location is the cytoplasm. It is found in the secreted. The protein resides in the cell surface. The catalysed reaction is (2R)-2-phosphoglycerate = phosphoenolpyruvate + H2O. The protein operates within carbohydrate degradation; glycolysis; pyruvate from D-glyceraldehyde 3-phosphate: step 4/5. Functionally, catalyzes the reversible conversion of 2-phosphoglycerate (2-PG) into phosphoenolpyruvate (PEP). It is essential for the degradation of carbohydrates via glycolysis. In Leptospira borgpetersenii serovar Hardjo-bovis (strain L550), this protein is Enolase.